The chain runs to 370 residues: Queuine tRNA-ribosyltransferase (370 aa).

The active-site Proton acceptor is the Asp-89. Substrate-binding positions include 89–93 (DSGGF), Asp-143, Gln-187, and Gly-214. Positions 245-251 (GVGTPED) are RNA binding. Asp-264 acts as the Nucleophile in catalysis. The segment at 269–273 (TRNAR) is RNA binding; important for wobble base 34 recognition. Zn(2+) is bound by residues Cys-302, Cys-304, Cys-307, and His-333.

Belongs to the queuine tRNA-ribosyltransferase family. In terms of assembly, homodimer. Within each dimer, one monomer is responsible for RNA recognition and catalysis, while the other monomer binds to the replacement base PreQ1. Zn(2+) serves as cofactor.

It carries out the reaction 7-aminomethyl-7-carbaguanine + guanosine(34) in tRNA = 7-aminomethyl-7-carbaguanosine(34) in tRNA + guanine. Its pathway is tRNA modification; tRNA-queuosine biosynthesis. In terms of biological role, catalyzes the base-exchange of a guanine (G) residue with the queuine precursor 7-aminomethyl-7-deazaguanine (PreQ1) at position 34 (anticodon wobble position) in tRNAs with GU(N) anticodons (tRNA-Asp, -Asn, -His and -Tyr). Catalysis occurs through a double-displacement mechanism. The nucleophile active site attacks the C1' of nucleotide 34 to detach the guanine base from the RNA, forming a covalent enzyme-RNA intermediate. The proton acceptor active site deprotonates the incoming PreQ1, allowing a nucleophilic attack on the C1' of the ribose to form the product. After dissociation, two additional enzymatic reactions on the tRNA convert PreQ1 to queuine (Q), resulting in the hypermodified nucleoside queuosine (7-(((4,5-cis-dihydroxy-2-cyclopenten-1-yl)amino)methyl)-7-deazaguanosine). The sequence is that of Queuine tRNA-ribosyltransferase from Aromatoleum aromaticum (strain DSM 19018 / LMG 30748 / EbN1) (Azoarcus sp. (strain EbN1)).